Here is a 173-residue protein sequence, read N- to C-terminus: Ribosome maturation factor RimM (173 aa).

A PRC barrel domain is found at 78–157 (EEEFYLADLI…VLVVPPEEVE (80 aa)). The interval 152–173 (PPEEVEAQEPPEKDAGGDEPSP) is disordered.

This sequence belongs to the RimM family. As to quaternary structure, binds ribosomal protein uS19.

Its subcellular location is the cytoplasm. Its function is as follows. An accessory protein needed during the final step in the assembly of 30S ribosomal subunit, possibly for assembly of the head region. Essential for efficient processing of 16S rRNA. May be needed both before and after RbfA during the maturation of 16S rRNA. It has affinity for free ribosomal 30S subunits but not for 70S ribosomes. The protein is Ribosome maturation factor RimM of Beijerinckia indica subsp. indica (strain ATCC 9039 / DSM 1715 / NCIMB 8712).